A 59-amino-acid chain; its full sequence is Large ribosomal subunit protein bL32 (59 aa).

The protein belongs to the bacterial ribosomal protein bL32 family.

The sequence is that of Large ribosomal subunit protein bL32 from Synechococcus sp. (strain JA-2-3B'a(2-13)) (Cyanobacteria bacterium Yellowstone B-Prime).